Consider the following 765-residue polypeptide: Probable dipeptidyl peptidase 4 (765 aa).

The N-terminal stretch at M1 to A14 is a signal peptide. N-linked (GlcNAc...) asparagine glycans are attached at residues N35, N78, N101, N110, N169, N218, N465, and N490. Catalysis depends on S613, which acts as the Charge relay system. N-linked (GlcNAc...) asparagine glycosylation is present at N665. Residues D690 and H725 each act as charge relay system in the active site.

It belongs to the peptidase S9B family.

The protein resides in the secreted. The catalysed reaction is Release of an N-terminal dipeptide, Xaa-Yaa-|-Zaa-, from a polypeptide, preferentially when Yaa is Pro, provided Zaa is neither Pro nor hydroxyproline.. Its function is as follows. Extracellular dipeptidyl-peptidase which removes N-terminal dipeptides sequentially from polypeptides having unsubstituted N-termini provided that the penultimate residue is proline. The chain is Probable dipeptidyl peptidase 4 (dpp4) from Neosartorya fischeri (strain ATCC 1020 / DSM 3700 / CBS 544.65 / FGSC A1164 / JCM 1740 / NRRL 181 / WB 181) (Aspergillus fischerianus).